A 449-amino-acid polypeptide reads, in one-letter code: uncharacterized protein (449 aa).

Disordered stretches follow at residues 1-58 (MVKR…SLSS) and 71-125 (EALE…VVEL). Residues 30–46 (KQRDELREKQKRKREDS) show a composition bias toward basic and acidic residues. Acidic residues predominate over residues 103–124 (SDDDDDDNEEEDDNGFEDQVVE).

It belongs to the bystin family.

This is an uncharacterized protein from Caenorhabditis elegans.